Consider the following 902-residue polypeptide: Gamma-tubulin complex component 2 (902 aa).

Tyr-83 bears the Phosphotyrosine mark. The interval 875–902 (ERSQKAAPQVPVLRGPPAPAPRVAVTAQ) is disordered.

This sequence belongs to the TUBGCP family. As to quaternary structure, component of the gamma-tubulin ring complex (gTuRC) consisting of TUBGCP2, TUBGCP3, TUBGCP4, TUBGCP5 and TUBGCP6 and gamma-tubulin TUBG1 or TUBG2. TUBGCP2, TUBGCP3, TUBGCP4, TUBGCP5 and TUBGCP6 assemble in a 5:5:2:1:1 stoichiometry; each is associated with a gamma-tubulin, thereby arranging 14 gamma-tubulins in a helical manner. Gamma-tubulin at the first position is blocked by TUBGCP3 at the last position, allowing 13 protafilaments to grow into a microtubule. The gTuRC (via TUBGCP3 and TUBGCP6) interacts with ACTB and MZT1; the interactions form a luminal bridge that stabilizes the initial structure during complex assembly. The gTuRC (via TUBGCP2) interacts with MZT2A/MZT2B and CDK5RAP2 (via CM1 motif); the interactions play a role in gTuRC activation. Interacts with ATF5; the ATF5:PCNT:polyglutamylated tubulin (PGT) tripartite unites the mother centriole and the pericentriolar material (PCM) in the centrosome.

The protein resides in the cytoplasm. The protein localises to the cytoskeleton. It is found in the microtubule organizing center. It localises to the centrosome. Its function is as follows. Component of the gamma-tubulin ring complex (gTuRC) which mediates microtubule nucleation. The gTuRC regulates the minus-end nucleation of alpha-beta tubulin heterodimers that grow into microtubule protafilaments, a critical step in centrosome duplication and spindle formation. Plays a role in neuronal migration. The chain is Gamma-tubulin complex component 2 (TUBGCP2) from Pongo abelii (Sumatran orangutan).